A 566-amino-acid chain; its full sequence is Zinc finger protein 704 (566 aa).

Disordered regions lie at residues 1–148 (MQAR…ARGA), 166–203 (DFRRDSSKKPSHHLFPLAMEEDVRTADTKKTSRVLDQE), and 253–324 (PLVR…DEAD). A compositionally biased stretch (low complexity) spans 12–31 (LGSRRGGAAPAPAPEAAALG). Pro residues predominate over residues 32-55 (LPPPGPSPAAAPGSWRPPLPPPRG). The span at 56–72 (TGPSRAAAASSPVLLLL) shows a compositional bias: low complexity. Basic and acidic residues predominate over residues 91–100 (RVTEKPRGVA). Residues 101–128 (EEEDDDEEEDEEVVVEVVDGDEDDEDAE) are compositionally biased toward acidic residues. Residues 186–203 (EDVRTADTKKTSRVLDQE) show a composition bias toward basic and acidic residues. Residues 267–290 (SGSWKEGAPSSSSSSGYWSWSAPS) show a composition bias toward low complexity. A C2H2-type zinc finger spans residues 346 to 371 (FKCLWKSCGKVLNTAAGIQKHIRAVH). Ser378 and Ser381 each carry phosphoserine. Disordered regions lie at residues 409 to 436 (VSPSQSLASAPAFPIPDSSRTETPCAKT) and 497 to 535 (PVSPPHHPTAGSGEQRQHAHTALSSPPRGTVTLRKPRGE). The sufficient for binding to RE2 sequence motifs stretch occupies residues 471–566 (GSAKFTPNGS…WKKACQRFID (96 aa)). The short motif at 537 to 541 (KKCRK) is the CR1 element. The short motif at 555–559 (CRWKK) is the CR2 element.

It localises to the nucleus. Transcription factor which binds to RE2 sequence elements in the MYOD1 enhancer. The protein is Zinc finger protein 704 of Mus musculus (Mouse).